The sequence spans 64 residues: Large ribosomal subunit protein bL28 (64 aa).

The segment at 1 to 26 is disordered; it reads MARRDQLTGKGPLSGNTRSHAMNHSK.

It belongs to the bacterial ribosomal protein bL28 family.

The chain is Large ribosomal subunit protein bL28 from Ureaplasma urealyticum serovar 10 (strain ATCC 33699 / Western).